A 707-amino-acid chain; its full sequence is NADP(+)-dependent formate dehydrogenase subunit beta (707 aa).

Heterotetramer composed of two alpha (FdhA) and two beta (FdhB) subunits.

The protein localises to the cytoplasm. The enzyme catalyses formate + NADP(+) = CO2 + NADPH. Its activity is regulated as follows. Activity is very sensitive to oxygen. The activity in growing cells is enhanced when selenite and molybdate are added together to the growth medium. Tungstate replaces and is better than molybdate. Selenite is incorporated into the enzyme. Requires a sulfhydryl compound for activity. Inhibited by cyanide, EDTA, hypophosphite and mercaptoethanol. Sulfite inhibits the activity with NADP but not with methyl viologen as electron acceptor. Functionally, component of a dehydrogenase that catalyzes the NADP-dependent reduction of CO(2) to formate, the first step in the synthesis of the methyl group of acetate during synthesis of acetate from CO(2). In vitro, can use methyl viologen and benzyl viologen in addition to its natural electron acceptor. The chain is NADP(+)-dependent formate dehydrogenase subunit beta from Moorella thermoacetica (Clostridium thermoaceticum).